A 381-amino-acid chain; its full sequence is Pentatricopeptide repeat-containing protein 2, mitochondrial (381 aa).

The stretch at 159 to 193 (TSFNILMDMLFTKGKYERALQVLIEMKNQDVRFSK) is one PPR repeat. Ser375 is modified (phosphoserine).

The protein belongs to the PTCD2 family. High expression in heart and liver and low expression in kidney, brain and testis.

The protein resides in the mitochondrion. Functionally, involved in mitochondrial RNA maturation and mitochondrial respiratory chain function. This Mus musculus (Mouse) protein is Pentatricopeptide repeat-containing protein 2, mitochondrial (Ptcd2).